The primary structure comprises 426 residues: Histidine--tRNA ligase (426 aa).

This sequence belongs to the class-II aminoacyl-tRNA synthetase family.

Its subcellular location is the cytoplasm. The enzyme catalyses tRNA(His) + L-histidine + ATP = L-histidyl-tRNA(His) + AMP + diphosphate + H(+). This Saccharolobus solfataricus (strain ATCC 35092 / DSM 1617 / JCM 11322 / P2) (Sulfolobus solfataricus) protein is Histidine--tRNA ligase.